A 293-amino-acid chain; its full sequence is Proline iminopeptidase (293 aa).

The AB hydrolase-1 domain maps to 28–277; the sequence is PLVLLHGGPG…NCGHMSFVEK (250 aa). Residue Ser-105 is the Nucleophile of the active site. Asp-244 is a catalytic residue. The active-site Proton donor is His-271.

It belongs to the peptidase S33 family.

It is found in the cell envelope. The enzyme catalyses Release of N-terminal proline from a peptide.. Its function is as follows. Releases the N-terminal proline from various substrates. This is Proline iminopeptidase from Lactobacillus crispatus (strain ST1).